Reading from the N-terminus, the 148-residue chain is Sperm-specific protein PHI-2B (148 aa).

Residues 1–35 (PSPSRRSRSRSRSRSKSPKRSPAKKARKTPKKRRA) show a composition bias toward basic residues. Disordered regions lie at residues 1–44 (PSPS…KPST) and 97–148 (GVLV…KSNN). In terms of domain architecture, H15 spans 40-119 (KKPSTLSMIV…GATGSFRVGK (80 aa)). A compositionally biased stretch (basic residues) spans 124 to 148 (PKKKAKKAKSPKKKSSKKSSNKSNN).

This sequence belongs to the histone H1/H5 family. As to expression, sperm.

Its subcellular location is the nucleus. The protein localises to the chromosome. Linker histones are implicated in chromatin remodeling and/or transcriptional regulation during spermiogenesis, the process of spermatid maturation into spermatozoa. In Mytilus californianus (California mussel), this protein is Sperm-specific protein PHI-2B.